Consider the following 198-residue polypeptide: Protein RD3-like (198 aa).

A coiled-coil region spans residues 28–57 (KTLLRELKWHLKERERLIQEIENEQKVKKT). Residues 133–168 (GSEQEDLEDSGSMDCSAPSVIQGDSSKRADKDEIPT) are disordered. Residues 157 to 166 (SSKRADKDEI) are compositionally biased toward basic and acidic residues.

The sequence is that of Protein RD3-like (RD3L) from Homo sapiens (Human).